The chain runs to 356 residues: Glucose 1-dehydrogenase 2 (356 aa).

A Zn(2+)-binding site is contributed by Asp38. Ser40 provides a ligand contact to substrate. Residues His64 and Glu65 each contribute to the Zn(2+) site. Substrate contacts are provided by Glu114 and Glu150. Glu150 contacts Zn(2+). Residues 181–184 (NGNL), 206–207 (RR), and 301–303 (VVN) contribute to the NADP(+) site. Asn303 contacts substrate.

Belongs to the zinc-containing alcohol dehydrogenase family. Glucose 1-dehydrogenase subfamily. Zn(2+) serves as cofactor.

The enzyme catalyses D-glucose + NAD(+) = D-glucono-1,5-lactone + NADH + H(+). It carries out the reaction D-glucose + NADP(+) = D-glucono-1,5-lactone + NADPH + H(+). Functionally, catalyzes the NAD(P)(+)-dependent oxidation of D-glucose to D-gluconate via gluconolactone. Can utilize both NAD(+) and NADP(+) as electron acceptor. Is involved in the degradation of glucose through a modified Entner-Doudoroff pathway. This Haloterrigena turkmenica (strain ATCC 51198 / DSM 5511 / JCM 9101 / NCIMB 13204 / VKM B-1734 / 4k) (Halococcus turkmenicus) protein is Glucose 1-dehydrogenase 2.